A 441-amino-acid polypeptide reads, in one-letter code: Ribosomal protein uS12 methylthiotransferase RimO (441 aa).

An MTTase N-terminal domain is found at 6–116 (QKVGIVSLGC…VVAAVHEAAP (111 aa)). Residues C15, C51, C80, C147, C151, and C154 each contribute to the [4Fe-4S] cluster site. Positions 133–370 (LTPRHYAYLK…MAAQQEISER (238 aa)) constitute a Radical SAM core domain. One can recognise a TRAM domain in the interval 373 to 439 (AQKVGTVIEA…EYDLWGSLAG (67 aa)).

Belongs to the methylthiotransferase family. RimO subfamily. It depends on [4Fe-4S] cluster as a cofactor.

The protein localises to the cytoplasm. The enzyme catalyses L-aspartate(89)-[ribosomal protein uS12]-hydrogen + (sulfur carrier)-SH + AH2 + 2 S-adenosyl-L-methionine = 3-methylsulfanyl-L-aspartate(89)-[ribosomal protein uS12]-hydrogen + (sulfur carrier)-H + 5'-deoxyadenosine + L-methionine + A + S-adenosyl-L-homocysteine + 2 H(+). In terms of biological role, catalyzes the methylthiolation of an aspartic acid residue of ribosomal protein uS12. The sequence is that of Ribosomal protein uS12 methylthiotransferase RimO from Rhodospirillum rubrum (strain ATCC 11170 / ATH 1.1.1 / DSM 467 / LMG 4362 / NCIMB 8255 / S1).